Reading from the N-terminus, the 412-residue chain is Isovaleryl-CoA dehydrogenase, mitochondrial (412 aa).

A mitochondrion-targeting transit peptide spans 1–25 (MHKLFVARSVKSALFRIKNHQKPQF). Residues 154–163 (LAMSEPNAGS) and 187–189 (WCT) each bind FAD. Residue S163 participates in substrate binding. Substrate is bound by residues 209 to 210 (SK), Y264, and 271 to 274 (DLER). Residue E273 is the Proton acceptor of the active site. Residues R299, Q310, and 367–371 (QCLGG) each bind FAD. 394-395 (AG) contributes to the substrate binding site. Position 396–398 (396–398 (TSE)) interacts with FAD.

The protein belongs to the acyl-CoA dehydrogenase family. In terms of assembly, homotetramer. The cofactor is FAD. Expressed in flowers and tubers.

It is found in the mitochondrion. It catalyses the reaction 3-methylbutanoyl-CoA + oxidized [electron-transfer flavoprotein] + H(+) = 3-methylbut-2-enoyl-CoA + reduced [electron-transfer flavoprotein]. It functions in the pathway amino-acid degradation; L-leucine degradation; (S)-3-hydroxy-3-methylglutaryl-CoA from 3-isovaleryl-CoA: step 1/3. Its function is as follows. Involved in the catabolism of amino acids. Uses isovaleryl-CoA as substrate. Minor activity detected with 2-methylpalmitoyl-CoA or 2-methylbutanoyl-CoA, but no activity with short- and medium-straight chain acyl-CoA esters or with 2-methylhexanoyl-CoA. The protein is Isovaleryl-CoA dehydrogenase, mitochondrial (IVD) of Solanum tuberosum (Potato).